The following is a 486-amino-acid chain: Protein nucleotidyltransferase YdiU (486 aa).

ATP is bound by residues Gly-90, Gly-92, Arg-93, Lys-113, Asp-125, Gly-126, Arg-176, and Arg-183. The Proton acceptor role is filled by Asp-252. Mg(2+)-binding residues include Asn-253 and Asp-262. An ATP-binding site is contributed by Asp-262.

The protein belongs to the SELO family. It depends on Mg(2+) as a cofactor. Mn(2+) serves as cofactor.

It carries out the reaction L-seryl-[protein] + ATP = 3-O-(5'-adenylyl)-L-seryl-[protein] + diphosphate. It catalyses the reaction L-threonyl-[protein] + ATP = 3-O-(5'-adenylyl)-L-threonyl-[protein] + diphosphate. The enzyme catalyses L-tyrosyl-[protein] + ATP = O-(5'-adenylyl)-L-tyrosyl-[protein] + diphosphate. The catalysed reaction is L-histidyl-[protein] + UTP = N(tele)-(5'-uridylyl)-L-histidyl-[protein] + diphosphate. It carries out the reaction L-seryl-[protein] + UTP = O-(5'-uridylyl)-L-seryl-[protein] + diphosphate. It catalyses the reaction L-tyrosyl-[protein] + UTP = O-(5'-uridylyl)-L-tyrosyl-[protein] + diphosphate. Functionally, nucleotidyltransferase involved in the post-translational modification of proteins. It can catalyze the addition of adenosine monophosphate (AMP) or uridine monophosphate (UMP) to a protein, resulting in modifications known as AMPylation and UMPylation. The sequence is that of Protein nucleotidyltransferase YdiU from Pseudomonas putida (strain W619).